The primary structure comprises 322 residues: Probable transcription factor KAN3 (322 aa).

A disordered region spans residues 1–35 (MELFPSQPDLYLKISRRREEEQEKESQELQEQEVE). Residues 17–35 (RREEEQEKESQELQEQEVE) are compositionally biased toward basic and acidic residues. Positions 161–221 (GVRAPRMRWT…HLQMYRTIKS (61 aa)) constitute an HTH myb-type domain. Residues 192 to 217 (PKSVLELMDVQDLTLAHVKSHLQMYR) constitute a DNA-binding region (H-T-H motif). Disordered regions lie at residues 222–244 (TEKP…NSER) and 267–322 (KASS…NLSP). Polar residues-rich tracts occupy residues 224 to 241 (KPTT…SQVN) and 299 to 322 (LTGT…NLSP).

In terms of tissue distribution, expressed in developing phloem.

The protein localises to the nucleus. Probable transcription factor that regulates lateral organ polarity. Plays a role in lateral root formation and development. The chain is Probable transcription factor KAN3 (KAN3) from Arabidopsis thaliana (Mouse-ear cress).